We begin with the raw amino-acid sequence, 661 residues long: Kyphoscoliosis peptidase (661 aa).

Over residues 28–41 the composition is skewed to polar residues; that stretch reads GTLSDQQANPSSLL. 2 disordered regions span residues 28 to 47 and 115 to 136; these read GTLS…GGGF and QGDK…HAYP. Catalysis depends on residues C225, H267, and D282.

Belongs to the transglutaminase-like superfamily. In terms of assembly, interacts with IGFN1 and FLNC. Highly expressed in skeletal muscle.

The protein resides in the cytoplasm. It localises to the cytoskeleton. The protein localises to the myofibril. Its subcellular location is the sarcomere. It is found in the z line. Probable cytoskeleton-associated protease required for normal muscle growth. Involved in function, maturation and stabilization of the neuromuscular junction. May act by cleaving muscle-specific proteins such as FLNC. This is Kyphoscoliosis peptidase from Homo sapiens (Human).